The chain runs to 64 residues: MTTVKFKYKGEEKQVDISKIKKVWRVGKMISFTYDEGGGKTGRGAVSEKDAPKELLQMLEKQKK.

The protein belongs to the 7 kDa DNA-binding/endoribonuclease P2 family. Monomer.

The protein localises to the cytoplasm. Functionally, can constrain negative DNA supercoils. May be involved in maintaining the integrity of the genome at high temperature. The protein is DNA-binding protein 7a of Saccharolobus islandicus (strain L.D.8.5 / Lassen #2) (Sulfolobus islandicus).